The chain runs to 468 residues: tRNA modification GTPase MnmE (468 aa).

(6S)-5-formyl-5,6,7,8-tetrahydrofolate contacts are provided by R29, E97, and K136. Residues 232 to 390 (GFELAIVGRP…VVAHIVARME (159 aa)) enclose the TrmE-type G domain. N242 serves as a coordination point for K(+). GTP is bound by residues 242 to 247 (NVGKSS), 261 to 267 (TDLAGTT), and 286 to 289 (DTAG). S246 lines the Mg(2+) pocket. T261, L263, and T266 together coordinate K(+). T267 lines the Mg(2+) pocket. Position 468 (K468) interacts with (6S)-5-formyl-5,6,7,8-tetrahydrofolate.

This sequence belongs to the TRAFAC class TrmE-Era-EngA-EngB-Septin-like GTPase superfamily. TrmE GTPase family. Homodimer. Heterotetramer of two MnmE and two MnmG subunits. Requires K(+) as cofactor.

Its subcellular location is the cytoplasm. Its function is as follows. Exhibits a very high intrinsic GTPase hydrolysis rate. Involved in the addition of a carboxymethylaminomethyl (cmnm) group at the wobble position (U34) of certain tRNAs, forming tRNA-cmnm(5)s(2)U34. The chain is tRNA modification GTPase MnmE from Magnetococcus marinus (strain ATCC BAA-1437 / JCM 17883 / MC-1).